We begin with the raw amino-acid sequence, 347 residues long: Quinolinate synthase (347 aa).

Iminosuccinate contacts are provided by H47 and S68. C113 is a binding site for [4Fe-4S] cluster. Iminosuccinate is bound by residues 139-141 (YAN) and S156. C200 provides a ligand contact to [4Fe-4S] cluster. Residues 226–228 (HPE) and T243 each bind iminosuccinate. C297 serves as a coordination point for [4Fe-4S] cluster.

Belongs to the quinolinate synthase family. Type 1 subfamily. It depends on [4Fe-4S] cluster as a cofactor.

Its subcellular location is the cytoplasm. It carries out the reaction iminosuccinate + dihydroxyacetone phosphate = quinolinate + phosphate + 2 H2O + H(+). The protein operates within cofactor biosynthesis; NAD(+) biosynthesis; quinolinate from iminoaspartate: step 1/1. In terms of biological role, catalyzes the condensation of iminoaspartate with dihydroxyacetone phosphate to form quinolinate. The chain is Quinolinate synthase from Escherichia coli O157:H7.